A 33-amino-acid polypeptide reads, in one-letter code: Dermaseptin-H8 (33 aa).

Leucine 33 bears the Leucine amide mark.

In terms of tissue distribution, expressed by the skin glands.

The protein resides in the secreted. Has antimicrobial activity. The chain is Dermaseptin-H8 from Pithecopus hypochondrialis (Orange-legged leaf frog).